A 403-amino-acid polypeptide reads, in one-letter code: Argininosuccinate synthase (403 aa).

Residues 13–21 (AYSGGLDTS) and Ala40 contribute to the ATP site. Positions 91 and 96 each coordinate L-citrulline. Gly121 provides a ligand contact to ATP. Thr123, Asn127, and Asp128 together coordinate L-aspartate. L-citrulline is bound at residue Asn127. L-citrulline-binding residues include Arg131, Ser180, Ser189, Glu265, and Tyr277.

It belongs to the argininosuccinate synthase family. Type 1 subfamily. Homotetramer.

It localises to the cytoplasm. It catalyses the reaction L-citrulline + L-aspartate + ATP = 2-(N(omega)-L-arginino)succinate + AMP + diphosphate + H(+). It functions in the pathway amino-acid biosynthesis; L-arginine biosynthesis; L-arginine from L-ornithine and carbamoyl phosphate: step 2/3. This chain is Argininosuccinate synthase, found in Leptospira borgpetersenii serovar Hardjo-bovis (strain JB197).